A 413-amino-acid polypeptide reads, in one-letter code: Serine hydroxymethyltransferase (413 aa).

(6S)-5,6,7,8-tetrahydrofolate contacts are provided by residues Leu117 and 121-123 (GHL). Lys226 carries the post-translational modification N6-(pyridoxal phosphate)lysine. (6S)-5,6,7,8-tetrahydrofolate contacts are provided by residues Glu239 and 349–351 (SPF).

It belongs to the SHMT family. In terms of assembly, homodimer. Pyridoxal 5'-phosphate is required as a cofactor.

It localises to the cytoplasm. It catalyses the reaction (6R)-5,10-methylene-5,6,7,8-tetrahydrofolate + glycine + H2O = (6S)-5,6,7,8-tetrahydrofolate + L-serine. The protein operates within one-carbon metabolism; tetrahydrofolate interconversion. It functions in the pathway amino-acid biosynthesis; glycine biosynthesis; glycine from L-serine: step 1/1. Functionally, catalyzes the reversible interconversion of serine and glycine with tetrahydrofolate (THF) serving as the one-carbon carrier. This reaction serves as the major source of one-carbon groups required for the biosynthesis of purines, thymidylate, methionine, and other important biomolecules. Also exhibits THF-independent aldolase activity toward beta-hydroxyamino acids, producing glycine and aldehydes, via a retro-aldol mechanism. In Bacillus cereus (strain AH820), this protein is Serine hydroxymethyltransferase.